The sequence spans 414 residues: MSLEAIKFDRSEPRKVSVKVLDQLLLPYTTKYIPVHTIDDGYRVIKNMQVRGAPAIAIVGSLSILTEVQFLQLDSQKSTQWFYDLSDWSNVNSKLLQRIEFLLSSRPTAVNLSNSLTEIRGILQNSSDLSDFDSKLFQYVCTLIDDDLANNITMGNNGAEYLLESLVQDGFQGEFGVLTICNTGSLATSGYGTALGVIRSLWAKSQSQGSENPPSKKQKKDAAPTKMVQVFPLETRPYNQGSRLTAYELVHDEIPATLITDSMVSYKIKTSPIPIKAAFVGADRIVRNGDTANKIGTFQLAIVCKQFGIKFFVVAPKTTIDNVTPSGDQIVVEERKPSEFRLVTGTAVDYVNESPILNDSQEPQSAKVGIAPPNVNVWNPAFDITPHEFIDGIVTEKGVFTKDDKGNFQLDKLF.

Over residues 205–215 the composition is skewed to polar residues; that stretch reads SQSQGSENPPS. Positions 205 to 224 are disordered; that stretch reads SQSQGSENPPSKKQKKDAAP. Aspartate 283 acts as the Proton donor in catalysis.

It belongs to the eIF-2B alpha/beta/delta subunits family. MtnA subfamily.

It localises to the cytoplasm. It is found in the nucleus. It catalyses the reaction 5-(methylsulfanyl)-alpha-D-ribose 1-phosphate = 5-(methylsulfanyl)-D-ribulose 1-phosphate. Its pathway is amino-acid biosynthesis; L-methionine biosynthesis via salvage pathway; L-methionine from S-methyl-5-thio-alpha-D-ribose 1-phosphate: step 1/6. Catalyzes the interconversion of methylthioribose-1-phosphate (MTR-1-P) into methylthioribulose-1-phosphate (MTRu-1-P). This Zygosaccharomyces rouxii (strain ATCC 2623 / CBS 732 / NBRC 1130 / NCYC 568 / NRRL Y-229) protein is Methylthioribose-1-phosphate isomerase.